Reading from the N-terminus, the 515-residue chain is Maturase K (515 aa).

This sequence belongs to the intron maturase 2 family. MatK subfamily.

It is found in the plastid. Its subcellular location is the chloroplast. In terms of biological role, usually encoded in the trnK tRNA gene intron. Probably assists in splicing its own and other chloroplast group II introns. This is Maturase K from Pinus contorta (Shore pine).